We begin with the raw amino-acid sequence, 403 residues long: Aspartic protease PEP1 (403 aa).

The signal sequence occupies residues 1–20; it reads MVQISQIGAVLAVCSTLTVA. Residues 21-67 constitute a propeptide, activation peptide; sequence APTKGKARFNVPQVAVPMKAVHHPAVAYARALHKFGMKVPKAVSDAA. In terms of domain architecture, Peptidase A1 spans 82-400; the sequence is YVTQVTVGQG…DTEGPRIGFA (319 aa). Asp98 is an active-site residue. 2 N-linked (GlcNAc...) asparagine glycosylation sites follow: Asn159 and Asn270. Residue Asp293 is part of the active site. A disulfide bridge connects residues Cys329 and Cys361.

Belongs to the peptidase A1 family.

The protein resides in the secreted. It carries out the reaction Hydrolysis of proteins with broad specificity. Generally favors hydrophobic residues in P1 and P1', but also accepts Lys in P1, which leads to activation of trypsinogen. Does not clot milk.. Secreted aspartic endopeptidase that allows assimilation of proteinaceous substrates. Can catalyze hydrolysis of the major structural proteins of basement membrane, elastin, collagen, and laminin. Thought to play a significant role in virulence. The protein is Aspartic protease PEP1 (PEP1) of Arthroderma benhamiae (strain ATCC MYA-4681 / CBS 112371) (Trichophyton mentagrophytes).